The chain runs to 375 residues: Squamosa promoter-binding-like protein 9 (375 aa).

2 disordered regions span residues M1–G30 and G43–R73. Residues S18–G30 show a composition bias toward low complexity. The segment at I71–P148 adopts an SBP-type zinc-finger fold. Zn(2+)-binding residues include C74, C79, C96, H99, C115, C118, H122, and C134. The Bipartite nuclear localization signal motif lies at K131–K147. 2 disordered regions span residues L252–R278 and S345–L375. Residues N262–N275 show a composition bias toward low complexity. The span at S345–R362 shows a compositional bias: basic and acidic residues. Positions A363–L375 are enriched in polar residues.

The cofactor is Zn(2+).

The protein localises to the nucleus. It localises to the cytoplasm. In terms of biological role, trans-acting factor that binds specifically to the consensus nucleotide sequence 5'-TNCGTACAA-3'. The sequence is that of Squamosa promoter-binding-like protein 9 (SPL9) from Arabidopsis thaliana (Mouse-ear cress).